We begin with the raw amino-acid sequence, 182 residues long: UPF0149 protein CGSHiGG_07585 (182 aa).

Belongs to the UPF0149 family.

This Haemophilus influenzae (strain PittGG) protein is UPF0149 protein CGSHiGG_07585.